Reading from the N-terminus, the 431-residue chain is Guanine nucleotide exchange factor rei-2 (431 aa).

Residues 1–21 show a composition bias toward polar residues; that stretch reads MDETATSSEVTETFVSDPTTR. The disordered stretch occupies residues 1–28; that stretch reads MDETATSSEVTETFVSDPTTRQFEEDGH. Coiled-coil stretches lie at residues 149 to 171 and 214 to 247; these read EVLN…AESL and LEAQ…RISE. Residues 249 to 298 are disordered; the sequence is IHEERSTGSLESAVSSDQEDQKSDFKSSESLPGNPPPYAPTAPPPYEDKY. Positions 255 to 264 are enriched in polar residues; it reads TGSLESAVSS. The segment covering 281–293 has biased composition (pro residues); sequence GNPPPYAPTAPPP.

It belongs to the SH3BP5 family. As to quaternary structure, interacts with rab-11.1. Binds preferentially to the GDP-bound form of rab-11.1.

In terms of biological role, guanine nucleotide exchange factor for Rab GTPase Rab-11.1. May spatially and temporally regulate the distribution of Rab-11.1 to target membranes during embryogenesis. May play a role in cytokinesis, probably by targeting rab-11.1 to the cleavage furrows. This chain is Guanine nucleotide exchange factor rei-2, found in Caenorhabditis elegans.